Consider the following 671-residue polypeptide: DNA ligase (671 aa).

Residues 31–35, 80–81, and E110 each bind NAD(+); these read DAEYD and SL. Catalysis depends on K112, which acts as the N6-AMP-lysine intermediate. Residues R133, E167, K283, and K307 each coordinate NAD(+). C401, C404, C419, and C424 together coordinate Zn(2+). The BRCT domain occupies 587–671; that stretch reads EEELVFTGKT…YLPDEGGLNE (85 aa).

This sequence belongs to the NAD-dependent DNA ligase family. LigA subfamily. Mg(2+) is required as a cofactor. It depends on Mn(2+) as a cofactor.

It carries out the reaction NAD(+) + (deoxyribonucleotide)n-3'-hydroxyl + 5'-phospho-(deoxyribonucleotide)m = (deoxyribonucleotide)n+m + AMP + beta-nicotinamide D-nucleotide.. In terms of biological role, DNA ligase that catalyzes the formation of phosphodiester linkages between 5'-phosphoryl and 3'-hydroxyl groups in double-stranded DNA using NAD as a coenzyme and as the energy source for the reaction. It is essential for DNA replication and repair of damaged DNA. The chain is DNA ligase from Listeria monocytogenes serotype 4b (strain F2365).